The primary structure comprises 258 residues: 3-deoxy-manno-octulosonate cytidylyltransferase (258 aa).

Belongs to the KdsB family.

It localises to the cytoplasm. It catalyses the reaction 3-deoxy-alpha-D-manno-oct-2-ulosonate + CTP = CMP-3-deoxy-beta-D-manno-octulosonate + diphosphate. It participates in nucleotide-sugar biosynthesis; CMP-3-deoxy-D-manno-octulosonate biosynthesis; CMP-3-deoxy-D-manno-octulosonate from 3-deoxy-D-manno-octulosonate and CTP: step 1/1. It functions in the pathway bacterial outer membrane biogenesis; lipopolysaccharide biosynthesis. Activates KDO (a required 8-carbon sugar) for incorporation into bacterial lipopolysaccharide in Gram-negative bacteria. The sequence is that of 3-deoxy-manno-octulosonate cytidylyltransferase from Parvibaculum lavamentivorans (strain DS-1 / DSM 13023 / NCIMB 13966).